A 452-amino-acid chain; its full sequence is Heat shock protein 83 (452 aa).

Position 124 (arginine 124) interacts with ATP. The short motif at 448–452 (MEQVD) is the TPR repeat-binding element.

The protein belongs to the heat shock protein 90 family. As to quaternary structure, homodimer.

Its subcellular location is the cytoplasm. Molecular chaperone that promotes the maturation, structural maintenance and proper regulation of specific target proteins involved for instance in cell cycle control and signal transduction. Undergoes a functional cycle that is linked to its ATPase activity. This cycle probably induces conformational changes in the client proteins, thereby causing their activation. Interacts dynamically with various co-chaperones that modulate its substrate recognition, ATPase cycle and chaperone function. The polypeptide is Heat shock protein 83 (HSP83) (Leishmania donovani).